The following is a 715-amino-acid chain: Harpin secretion protein HrpI (715 aa).

7 consecutive transmembrane segments (helical) span residues 23–43 (GAAI…TGLI), 45–65 (VLIA…MYLP), 69–89 (AFST…ALSI), 115–135 (GNLA…FLVI), 203–223 (AIAG…IGVL), 241–261 (IGDG…AGMI), and 298–318 (MLGF…ISAI).

This sequence belongs to the FHIPEP (flagella/HR/invasion proteins export pore) family.

The protein resides in the cell inner membrane. Functionally, involved in the secretion of harpin; a proteinaceous elicitor of the hypersensitivity response in plants. The polypeptide is Harpin secretion protein HrpI (hrpI) (Erwinia amylovora (Fire blight bacteria)).